A 207-amino-acid polypeptide reads, in one-letter code: Thymidine kinase (207 aa).

ATP-binding positions include 15–22 and 88–91; these read GCMFSGKS and DEIQ. Catalysis depends on Glu-89, which acts as the Proton acceptor. Residues Cys-145, Cys-148, Cys-183, and His-186 each contribute to the Zn(2+) site. Positions 184-198 are enriched in basic residues; sequence RHHHEVPGKPKKRYN. Residues 184-207 form a disordered region; that stretch reads RHHHEVPGKPKKRYNHPLAGHTGE.

It belongs to the thymidine kinase family. Homotetramer.

It is found in the cytoplasm. The enzyme catalyses thymidine + ATP = dTMP + ADP + H(+). The chain is Thymidine kinase from Geobacillus kaustophilus (strain HTA426).